The chain runs to 255 residues: 20 kDa chaperonin, chloroplastic (255 aa).

A chloroplast-targeting transit peptide spans 1–53 (MAATHLTSTSSLTINTLPSFEGLRSASGISKINVSVAYPSFTSRSFRGLVVRA). Cpn-10 domain stretches follow at residues 54-156 (ASIT…ILET) and 157-255 (DDVK…AVLS).

This sequence belongs to the GroES chaperonin family. As to quaternary structure, forms stable complexes with CPN60 in the presence of ATP.

Its subcellular location is the plastid. It is found in the chloroplast. Seems to function only as a co-chaperone, along with cpn60, and in certain cases is essential for the discharge of biologically active proteins from cpn60. This is 20 kDa chaperonin, chloroplastic (CPN21) from Spinacia oleracea (Spinach).